The sequence spans 156 residues: MSLMHRASRVLPAGGWSGAADHIALDYEARFLRRKRLVAASGAEFLVDLPEVTNLRGGEAFALEDGRLIEVRCGLEPVLVVTGDLTRLAWHVGNRHTPCQIEPDRLLIRDDHVLETMLRGLGARVERRMEPFRPESGAYGSGRTMGHDHGPFHVHA.

The interval 133–156 (RPESGAYGSGRTMGHDHGPFHVHA) is disordered. Residues 145-156 (MGHDHGPFHVHA) are compositionally biased toward basic and acidic residues.

The protein belongs to the UreE family.

The protein localises to the cytoplasm. Functionally, involved in urease metallocenter assembly. Binds nickel. Probably functions as a nickel donor during metallocenter assembly. The polypeptide is Urease accessory protein UreE (Rhodobacter capsulatus (Rhodopseudomonas capsulata)).